Consider the following 396-residue polypeptide: Putative nickel insertion protein (396 aa).

This sequence belongs to the LarC family.

In Methanococcoides burtonii (strain DSM 6242 / NBRC 107633 / OCM 468 / ACE-M), this protein is Putative nickel insertion protein.